We begin with the raw amino-acid sequence, 495 residues long: 3-octaprenyl-4-hydroxybenzoate carboxy-lyase (495 aa).

Asn-172 is a Mn(2+) binding site. Prenylated FMN contacts are provided by residues 175-177 (IYR), 189-191 (RWL), and 194-195 (RG). Glu-238 lines the Mn(2+) pocket. Catalysis depends on Asp-287, which acts as the Proton donor.

Belongs to the UbiD family. Homohexamer. Requires prenylated FMN as cofactor. Mn(2+) is required as a cofactor.

Its subcellular location is the cell membrane. It catalyses the reaction a 4-hydroxy-3-(all-trans-polyprenyl)benzoate + H(+) = a 2-(all-trans-polyprenyl)phenol + CO2. Its pathway is cofactor biosynthesis; ubiquinone biosynthesis. Catalyzes the decarboxylation of 3-octaprenyl-4-hydroxy benzoate to 2-octaprenylphenol, an intermediate step in ubiquinone biosynthesis. This is 3-octaprenyl-4-hydroxybenzoate carboxy-lyase from Yersinia pseudotuberculosis serotype O:1b (strain IP 31758).